The following is a 286-amino-acid chain: Acetylglutamate kinase (286 aa).

Substrate is bound by residues 63 to 64, Arg85, and Asn178; that span reads GG.

Belongs to the acetylglutamate kinase family. ArgB subfamily.

The protein localises to the cytoplasm. The catalysed reaction is N-acetyl-L-glutamate + ATP = N-acetyl-L-glutamyl 5-phosphate + ADP. The protein operates within amino-acid biosynthesis; L-arginine biosynthesis; N(2)-acetyl-L-ornithine from L-glutamate: step 2/4. Catalyzes the ATP-dependent phosphorylation of N-acetyl-L-glutamate. This chain is Acetylglutamate kinase, found in Clostridioides difficile (strain 630) (Peptoclostridium difficile).